Reading from the N-terminus, the 518-residue chain is Serine--tRNA ligase, mitochondrial (518 aa).

The transit peptide at 1–34 directs the protein to the mitochondrion; sequence MAASIVRRLGPLVAGRGLRLRGGCVCNQSFKRSF. Lysine 110 bears the N6-acetyllysine mark. An N6-succinyllysine modification is found at lysine 195. 299–301 contacts L-serine; sequence TAE. 330–332 is an ATP binding site; sequence RAE. Position 337 is an N6-succinyllysine (lysine 337). Valine 345 lines the ATP pocket. Glutamate 352 contributes to the L-serine binding site. Residue 418 to 421 participates in ATP binding; that stretch reads EVTS. An L-serine-binding site is contributed by threonine 453. Residues 497–518 are disordered; the sequence is PLQYIGPNQPQKPRLPGQPASS.

This sequence belongs to the class-II aminoacyl-tRNA synthetase family. Type-1 seryl-tRNA synthetase subfamily. Homodimer. The tRNA molecule probably binds across the dimer. Post-translationally, two N-termini starting at positions 35 and 37 have been identified by direct sequencing.

The protein localises to the mitochondrion matrix. It carries out the reaction tRNA(Ser) + L-serine + ATP = L-seryl-tRNA(Ser) + AMP + diphosphate + H(+). The enzyme catalyses tRNA(Sec) + L-serine + ATP = L-seryl-tRNA(Sec) + AMP + diphosphate + H(+). The protein operates within aminoacyl-tRNA biosynthesis; selenocysteinyl-tRNA(Sec) biosynthesis; L-seryl-tRNA(Sec) from L-serine and tRNA(Sec): step 1/1. Catalyzes the attachment of serine to tRNA(Ser). Is also probably able to aminoacylate tRNA(Sec) with serine, to form the misacylated tRNA L-seryl-tRNA(Sec), which will be further converted into selenocysteinyl-tRNA(Sec). This is Serine--tRNA ligase, mitochondrial (SARS2) from Bos taurus (Bovine).